Here is a 578-residue protein sequence, read N- to C-terminus: MKASRFFIGTLKEAPADAEIVSHKLMVRAGMIRRVAGGIYNYLPIGLRSIRKVEAIVREEMNRAGAIELLMPAVQPAELWQESGRWEKYGPELLRFKDRKQSDFVIGPTHEEVVTDIARNQIKSYRQLPVNFYQVQTKFRDEIRPRFGVMRGREFIMKDAYSFDKDMDGLRESYRKMYDAYVRIFTRLGLDFRAVAADNGSIGGSGSHEFHVIAETGEDAIAYCPTSDFAANVEAAEALPLHAERAAPAEEMKKTATPGKAKCEAVAELLNIPLERTIKSIILATENEGAEPTIWLLMLRGDHDLNEIKASKLPGLADFRMATEAEIIETFGTPPGYLGPLNTKKPVKVVADRTVANMSDFVVGSNEVDYHTTGVNWGRDLPEPVVADIRNVKKGDPSPDGKGVIDICRGIEVGHVFQLGTKYSEAMNATCLDETGKPRPMEMGCYGIGVTRILGAAIEQNFDDRGIIWPESIAPFEVVLCPMGYDRSEAVREAADKLYATLLEAGIDVILDDRGERPGVMFADWELIGVPHRLVIGDRGLKDGKLEYQGRRDAEATLLPVEDAAQTVIAKVRAALAR.

Belongs to the class-II aminoacyl-tRNA synthetase family. ProS type 1 subfamily. As to quaternary structure, homodimer.

Its subcellular location is the cytoplasm. The catalysed reaction is tRNA(Pro) + L-proline + ATP = L-prolyl-tRNA(Pro) + AMP + diphosphate. Its function is as follows. Catalyzes the attachment of proline to tRNA(Pro) in a two-step reaction: proline is first activated by ATP to form Pro-AMP and then transferred to the acceptor end of tRNA(Pro). As ProRS can inadvertently accommodate and process non-cognate amino acids such as alanine and cysteine, to avoid such errors it has two additional distinct editing activities against alanine. One activity is designated as 'pretransfer' editing and involves the tRNA(Pro)-independent hydrolysis of activated Ala-AMP. The other activity is designated 'posttransfer' editing and involves deacylation of mischarged Ala-tRNA(Pro). The misacylated Cys-tRNA(Pro) is not edited by ProRS. The polypeptide is Proline--tRNA ligase (Paraburkholderia xenovorans (strain LB400)).